A 100-amino-acid chain; its full sequence is Small ribosomal subunit protein uS14c (100 aa).

Belongs to the universal ribosomal protein uS14 family. Part of the 30S ribosomal subunit.

It localises to the plastid. The protein resides in the chloroplast. Functionally, binds 16S rRNA, required for the assembly of 30S particles. The chain is Small ribosomal subunit protein uS14c from Ceratophyllum demersum (Rigid hornwort).